Reading from the N-terminus, the 464-residue chain is Cytoplasmic tRNA 2-thiolation protein 2 (464 aa).

It belongs to the CTU2/NCS2 family.

It localises to the cytoplasm. Its pathway is tRNA modification; 5-methoxycarbonylmethyl-2-thiouridine-tRNA biosynthesis. Functionally, plays a central role in 2-thiolation of mcm(5)S(2)U at tRNA wobble positions of tRNA(Lys), tRNA(Glu) and tRNA(Gln). May act by forming a heterodimer with NCS6/CTU1 that ligates sulfur from thiocarboxylated URM1 onto the uridine of tRNAs at wobble position. In Oryza sativa subsp. japonica (Rice), this protein is Cytoplasmic tRNA 2-thiolation protein 2.